A 122-amino-acid polypeptide reads, in one-letter code: Large ribosomal subunit protein uL14 (122 aa).

It belongs to the universal ribosomal protein uL14 family. In terms of assembly, part of the 50S ribosomal subunit. Forms a cluster with proteins L3 and L19. In the 70S ribosome, L14 and L19 interact and together make contacts with the 16S rRNA in bridges B5 and B8.

Functionally, binds to 23S rRNA. Forms part of two intersubunit bridges in the 70S ribosome. This Azorhizobium caulinodans (strain ATCC 43989 / DSM 5975 / JCM 20966 / LMG 6465 / NBRC 14845 / NCIMB 13405 / ORS 571) protein is Large ribosomal subunit protein uL14.